Here is a 222-residue protein sequence, read N- to C-terminus: Triosephosphate isomerase (222 aa).

Substrate is bound at residue N9–K11. H93 acts as the Electrophile in catalysis. E141 functions as the Proton acceptor in the catalytic mechanism. Residues I146, G181, and A202 to S203 contribute to the substrate site.

The protein belongs to the triosephosphate isomerase family. As to quaternary structure, homotetramer; dimer of dimers.

It localises to the cytoplasm. It catalyses the reaction D-glyceraldehyde 3-phosphate = dihydroxyacetone phosphate. It functions in the pathway carbohydrate biosynthesis; gluconeogenesis. Its pathway is carbohydrate degradation; glycolysis; D-glyceraldehyde 3-phosphate from glycerone phosphate: step 1/1. Functionally, involved in the gluconeogenesis. Catalyzes stereospecifically the conversion of dihydroxyacetone phosphate (DHAP) to D-glyceraldehyde-3-phosphate (G3P). The chain is Triosephosphate isomerase from Methanosarcina barkeri (strain Fusaro / DSM 804).